Reading from the N-terminus, the 198-residue chain is Transcriptional regulator GfcR (198 aa).

Belongs to the purine/pyrimidine phosphoribosyltransferase family. GfcR subfamily.

The polypeptide is Transcriptional regulator GfcR (Thermoplasma acidophilum (strain ATCC 25905 / DSM 1728 / JCM 9062 / NBRC 15155 / AMRC-C165)).